The chain runs to 452 residues: Trigger factor (452 aa).

The PPIase FKBP-type domain maps to 171–256 (GDRVTISFKG…ATKVEAPQDT (86 aa)).

The protein belongs to the FKBP-type PPIase family. Tig subfamily.

It localises to the cytoplasm. It carries out the reaction [protein]-peptidylproline (omega=180) = [protein]-peptidylproline (omega=0). Its function is as follows. Involved in protein export. Acts as a chaperone by maintaining the newly synthesized protein in an open conformation. Functions as a peptidyl-prolyl cis-trans isomerase. This is Trigger factor from Rhodopseudomonas palustris (strain HaA2).